Reading from the N-terminus, the 154-residue chain is Protein LOL1 (154 aa).

Putative zinc finger regions lie at residues Gln34–Val64, Gln73–Ala103, and His111–Val141.

It is found in the nucleus. Functionally, positive regulator of reactive oxygen-induced cell death. May be involved in the repression of the copper/zinc superoxide dismutase CSD1 and CSD2 that detoxify accumulating superoxide before the reactive oxygen species (ROS) can trigger a cell death cascade. LSD1 and LOL1 have antagonistic effects on CSD1 and CSD2 accumulation to regulate oxidative stress-induced cell death. This is Protein LOL1 (LOL1) from Arabidopsis thaliana (Mouse-ear cress).